The following is a 457-amino-acid chain: Argininosuccinate lyase (457 aa).

Belongs to the lyase 1 family. Argininosuccinate lyase subfamily.

The protein resides in the cytoplasm. It carries out the reaction 2-(N(omega)-L-arginino)succinate = fumarate + L-arginine. It participates in amino-acid biosynthesis; L-arginine biosynthesis; L-arginine from L-ornithine and carbamoyl phosphate: step 3/3. The protein is Argininosuccinate lyase of Serratia proteamaculans (strain 568).